Here is a 424-residue protein sequence, read N- to C-terminus: Ancylostoma secreted protein (424 aa).

The N-terminal stretch at 1–18 (MFSPVIVSVIFTIAFCDA) is a signal peptide. SCP domains lie at 41 to 177 (LDFH…SCIY) and 242 to 387 (LSVH…VCQY).

This sequence belongs to the CRISP family.

It is found in the secreted. Functionally, associated with the transition to parasitism by infective hookworm larvae. This is Ancylostoma secreted protein (ASP) from Ancylostoma caninum (Dog hookworm).